We begin with the raw amino-acid sequence, 299 residues long: Taste receptor type 2 member 5 (299 aa).

A topological domain (extracellular) is located at residue Met-1. Residues 2-22 form a helical membrane-spanning segment; that stretch reads LSAGLGLLMLVAVVEFLIGLI. The Cytoplasmic portion of the chain corresponds to 23–45; sequence GNGVLVVWSFREWIRKFSWSSYN. A helical transmembrane segment spans residues 46 to 66; sequence LIILGLAGCRFVLQWLIILDL. The Extracellular segment spans residues 67 to 82; sequence SLFPLFQSSRWLRYLS. The chain crosses the membrane as a helical span at residues 83–103; sequence IFWVLVSQASLWFATFLSVFY. The Cytoplasmic portion of the chain corresponds to 104 to 127; that stretch reads CKKITTFDHPAYLWLKQRAYNLSL. A helical transmembrane segment spans residues 128-148; it reads WCLLGYFIINLLLTVQIGLMF. Residues 149 to 175 lie on the Extracellular side of the membrane; that stretch reads YHPPQGNSSIRYPFESWQYLYAFRLNS. An N-linked (GlcNAc...) asparagine glycan is attached at Asn-155. The chain crosses the membrane as a helical span at residues 176–196; that stretch reads GSYLPLMVFLVSSGMLIVSLY. The Cytoplasmic portion of the chain corresponds to 197–223; the sequence is THHKKMKVHSAGRRDVRAKAHITALKS. Residues 224–244 form a helical membrane-spanning segment; it reads LGCFLLLHLVYIMASPFSIAS. Residues 245 to 253 are Extracellular-facing; the sequence is KTYPPDLTS. Residues 254-274 form a helical membrane-spanning segment; that stretch reads VFIWETLMAAYPSLHSLILIM. Over 275 to 299 the chain is Cytoplasmic; the sequence is GIPRVKQTCQKIXWKTVCARRCWGP.

Belongs to the G-protein coupled receptor T2R family.

It localises to the membrane. In terms of biological role, receptor that may play a role in the perception of bitterness and is gustducin-linked. May play a role in sensing the chemical composition of the gastrointestinal content. The activity of this receptor may stimulate alpha gustducin, mediate PLC-beta-2 activation and lead to the gating of TRPM5. This chain is Taste receptor type 2 member 5 (TAS2R5), found in Pan troglodytes (Chimpanzee).